We begin with the raw amino-acid sequence, 124 residues long: Fluoride-specific ion channel FluC (124 aa).

The next 4 helical transmembrane spans lie at 4 to 24 (LLLV…ISIF), 35 to 55 (FGTL…YALG), 60 to 80 (ISPE…TTFS), and 102 to 122 (VVLN…LVFS). Na(+)-binding residues include G74 and T77.

Belongs to the fluoride channel Fluc/FEX (TC 1.A.43) family.

It is found in the cell inner membrane. It catalyses the reaction fluoride(in) = fluoride(out). Its activity is regulated as follows. Na(+) is not transported, but it plays an essential structural role and its presence is essential for fluoride channel function. Functionally, fluoride-specific ion channel. Important for reducing fluoride concentration in the cell, thus reducing its toxicity. The sequence is that of Fluoride-specific ion channel FluC from Shewanella sp. (strain ANA-3).